Consider the following 84-residue polypeptide: Large ribosomal subunit protein bL27 (84 aa).

Positions 1 to 24 (MAHKKAGGSSRNGRDSKGQRLGCK) are disordered.

It belongs to the bacterial ribosomal protein bL27 family.

The polypeptide is Large ribosomal subunit protein bL27 (Pelobacter propionicus (strain DSM 2379 / NBRC 103807 / OttBd1)).